The primary structure comprises 206 residues: Uridine kinase (206 aa).

11-18 contacts ATP; it reads GGTGSGKS.

Belongs to the uridine kinase family.

The protein localises to the cytoplasm. It carries out the reaction uridine + ATP = UMP + ADP + H(+). It catalyses the reaction cytidine + ATP = CMP + ADP + H(+). It functions in the pathway pyrimidine metabolism; CTP biosynthesis via salvage pathway; CTP from cytidine: step 1/3. The protein operates within pyrimidine metabolism; UMP biosynthesis via salvage pathway; UMP from uridine: step 1/1. The polypeptide is Uridine kinase (Clostridium botulinum (strain Okra / Type B1)).